Reading from the N-terminus, the 37-residue chain is Large ribosomal subunit protein bL36c (37 aa).

This sequence belongs to the bacterial ribosomal protein bL36 family.

It localises to the plastid. The protein resides in the chloroplast. This chain is Large ribosomal subunit protein bL36c (rpl36), found in Chlorella vulgaris (Green alga).